Reading from the N-terminus, the 328-residue chain is Gonadotropin-releasing hormone receptor (328 aa).

Residues 1–38 are Extracellular-facing; sequence MANSDSPEQNENHCSSINSSIPLTPGSLPTLTLSGKIR. An N-linked (GlcNAc...) asparagine glycan is attached at Asn18. A helical membrane pass occupies residues 39–58; sequence VTVTFFLFLLSTIFNTSFLL. Residues 59-77 are Cytoplasmic-facing; it reads KLQNWTQRKEKRKKLSRMK. The chain crosses the membrane as a helical span at residues 78–97; sequence LLLKHLTLANLLETLIVMPL. Residues 98 to 115 lie on the Extracellular side of the membrane; it reads DGMWNITVQWYAGELLCK. Asn102 is a glycosylation site (N-linked (GlcNAc...) asparagine). Cys114 and Cys196 are disulfide-bonded. A helical transmembrane segment spans residues 116–137; that stretch reads VLSYLKLFSMYAPAFMMVVISL. Residues 138 to 164 are Cytoplasmic-facing; sequence DRSLAITKPLAVKSNSKLGQFMIGLAW. The helical transmembrane segment at 165–184 threads the bilayer; that stretch reads LLSSIFAGPQLYIFGMIHLA. At 185–212 the chain is on the extracellular side; that stretch reads DDSGQTEGFSQCVTHCSFPQWWHQAFYN. A helical transmembrane segment spans residues 213–232; it reads FFTFSCLFIIPLLIMVICNA. The Cytoplasmic segment spans residues 233–281; that stretch reads KIIFTLTRVLHQDPHKLQLNQSKNNIPRARLRTLKMTVAFATSFTVCWT. Residues 282 to 300 traverse the membrane as a helical segment; the sequence is PYYVLGIWYWFDPDMVNRV. Over 301–306 the chain is Extracellular; it reads SDPVNH. Residues 307–326 form a helical membrane-spanning segment; that stretch reads FFFLFAFLNPCFNPLIYGYF. Over 327–328 the chain is Cytoplasmic; that stretch reads SL.

This sequence belongs to the G-protein coupled receptor 1 family.

The protein localises to the cell membrane. Receptor for gonadotropin releasing hormone (GnRH) that mediates the action of GnRH to stimulate the secretion of the gonadotropic hormones luteinizing hormone (LH) and follicle-stimulating hormone (FSH). This receptor mediates its action by association with G-proteins that activate a phosphatidylinositol-calcium second messenger system. In Bos mutus grunniens (Wild yak), this protein is Gonadotropin-releasing hormone receptor (GNRHR).